Reading from the N-terminus, the 239-residue chain is Large ribosomal subunit protein uL3 (239 aa).

Disordered stretches follow at residues serine 140–glycine 164 and proline 211–alanine 239. Glutamine 151 is subject to N5-methylglutamine.

Belongs to the universal ribosomal protein uL3 family. Part of the 50S ribosomal subunit. Forms a cluster with proteins L14 and L19. Post-translationally, methylated by PrmB.

Its function is as follows. One of the primary rRNA binding proteins, it binds directly near the 3'-end of the 23S rRNA, where it nucleates assembly of the 50S subunit. This is Large ribosomal subunit protein uL3 from Bradyrhizobium sp. (strain ORS 278).